Consider the following 235-residue polypeptide: Calcium-activated potassium channel subunit beta-2 (235 aa).

The tract at residues Met1–Asp45 is ball and chain. At Met1–Arg46 the chain is on the cytoplasmic side. Residues Ala47–Ile67 form a helical membrane-spanning segment. Over Thr68–Asn194 the chain is Extracellular. N-linked (GlcNAc...) asparagine glycosylation is found at Asn88, Asn96, and Asn119. A helical transmembrane segment spans residues Val195–Ala215. Over Met216–Arg235 the chain is Cytoplasmic.

It belongs to the KCNMB (TC 8.A.14.1) family. KCNMB2 subfamily. As to quaternary structure, interacts with KCNMA1 tetramer. There are probably 4 molecules of KCMNB2 per KCNMA1 tetramer. N-glycosylated. In terms of tissue distribution, highly expressed in brain and heart. Also expressed in lung.

The protein resides in the membrane. Its function is as follows. Regulatory subunit of the calcium activated potassium KCNMA1 (maxiK) channel. Modulates the calcium sensitivity and gating kinetics of KCNMA1, thereby contributing to KCNMA1 channel diversity. Acts as a negative regulator that confers rapid and complete inactivation of KCNMA1 channel complex. The polypeptide is Calcium-activated potassium channel subunit beta-2 (Kcnmb2) (Rattus norvegicus (Rat)).